The primary structure comprises 56 residues: Large ribosomal subunit protein bL32 (56 aa).

Residues 1 to 39 form a disordered region; sequence MAVQQNKKSRSKRGMRRSHDSLSTAQLSVDATSGELHRR. A compositionally biased stretch (basic residues) spans 7-16; sequence KKSRSKRGMR. Residues 21 to 31 are compositionally biased toward polar residues; it reads SLSTAQLSVDA.

It belongs to the bacterial ribosomal protein bL32 family.

The sequence is that of Large ribosomal subunit protein bL32 from Shewanella piezotolerans (strain WP3 / JCM 13877).